We begin with the raw amino-acid sequence, 246 residues long: Bacteriorhodopsin-II-like protein (246 aa).

The next 7 helical transmembrane spans lie at 7–27, 45–65, 82–102, 107–127, 135–155, 182–202, and 205–225; these read EATW…YFAV, TLIP…LGVI, YADW…VAGA, LYKL…GSMM, IVWW…LLGE, WALY…IIAV, and EIML…AVLL. The residue at position 217 (lysine 217) is an N6-(retinylidene)lysine.

Belongs to the archaeal/bacterial/fungal opsin family. In terms of processing, the covalent binding of retinal to the apoprotein, bacterioopsin, generates bacteriorhodopsin.

The protein localises to the cell membrane. Functionally, has no proton-pumping activity but is potentially capable of functioning as a sensory SRII-like protein. The chromophore contains 36.5% all-trans-, 7.6% 11-cis- and 56.4% 13-cis-retinal in the dark and 30.1% 11-cis- and 47.7% 13-cis-retinal upon illumination with &gt;460 nm light. The chain is Bacteriorhodopsin-II-like protein (bop2) from Haloquadratum walsbyi (strain DSM 16790 / HBSQ001).